A 162-amino-acid chain; its full sequence is Ribosome-binding factor A (162 aa).

Positions Asp-121 to Asp-162 are disordered. Residues Arg-125 to Pro-136 are compositionally biased toward low complexity.

Belongs to the RbfA family. Monomer. Binds 30S ribosomal subunits, but not 50S ribosomal subunits or 70S ribosomes.

The protein localises to the cytoplasm. Functionally, one of several proteins that assist in the late maturation steps of the functional core of the 30S ribosomal subunit. Associates with free 30S ribosomal subunits (but not with 30S subunits that are part of 70S ribosomes or polysomes). Required for efficient processing of 16S rRNA. May interact with the 5'-terminal helix region of 16S rRNA. The polypeptide is Ribosome-binding factor A (Rhodococcus jostii (strain RHA1)).